The chain runs to 386 residues: Myosin light chain kinase family member 4 (386 aa).

The residue at position 100 (S100) is a Phosphoserine. The Protein kinase domain occupies 107-361; the sequence is VSKSEILGGG…ASEALKHPWL (255 aa). ATP contacts are provided by residues 113-121 and K136; that span reads LGGGRFGQV. D227 functions as the Proton acceptor in the catalytic mechanism.

Belongs to the protein kinase superfamily. CAMK Ser/Thr protein kinase family.

The enzyme catalyses L-seryl-[protein] + ATP = O-phospho-L-seryl-[protein] + ADP + H(+). The catalysed reaction is L-threonyl-[protein] + ATP = O-phospho-L-threonyl-[protein] + ADP + H(+). This chain is Myosin light chain kinase family member 4 (Mylk4), found in Mus musculus (Mouse).